The chain runs to 169 residues: Small ribosomal subunit protein uS5 (169 aa).

In terms of domain architecture, S5 DRBM spans 14–77 (LDDQVVAINR…AAAEKNLITV (64 aa)).

It belongs to the universal ribosomal protein uS5 family. As to quaternary structure, part of the 30S ribosomal subunit. Contacts proteins S4 and S8.

In terms of biological role, with S4 and S12 plays an important role in translational accuracy. Its function is as follows. Located at the back of the 30S subunit body where it stabilizes the conformation of the head with respect to the body. The polypeptide is Small ribosomal subunit protein uS5 (Limosilactobacillus reuteri (strain DSM 20016) (Lactobacillus reuteri)).